The following is a 267-amino-acid chain: Apolipoprotein A-I (267 aa).

The first 18 residues, 1 to 18 (MKAAVLTLAVLFLTGSQA), serve as a signal peptide directing secretion. 2 repeat units span residues 68–89 (LKLLDNWDSLTSTVNKLREDLG) and 90–111 (PVTQEFWDNLEKETGWLRQEMS). A 10 X approximate tandem repeats region spans residues 68-267 (LKLLDNWDSL…EEYAKKLSSQ (200 aa)). Met110 carries the methionine sulfoxide modification. One copy of the 3; half-length repeat lies at 112 to 122 (KDLEEVKAKVQ). 5 repeat units span residues 123-144 (PYLDDFQKKWQEEVKLYSQKLE), 145-166 (PLRTEFQEGALQKLQDLQEKLS), 167-188 (PLAEQVRDRARAHVDTLRTQLA), 189-210 (PYSDELRQRLATRLEVLKESGG), and 211-232 (ASLAEYHAKASEHLSALGEKAK). One copy of the 9; half-length repeat lies at 233–243 (PALEDLRQGLL). Repeat unit 10 spans residues 244-267 (PVLESFKVSFLSALEEYAKKLSSQ).

It belongs to the apolipoprotein A1/A4/E family. Homodimer. Interacts with APOA1BP and CLU. Component of a sperm activating protein complex (SPAP), consisting of APOA1, an immunoglobulin heavy chain, an immunoglobulin light chain and albumin. Interacts with NDRG1. Interacts with SCGB3A2. Interacts with NAXE and YJEFN3. In terms of processing, glycosylated. Post-translationally, palmitoylated. Phosphorylation sites are present in the extracellular medium.

The protein resides in the secreted. Functionally, participates in the reverse transport of cholesterol from tissues to the liver for excretion by promoting cholesterol efflux from tissues and by acting as a cofactor for the lecithin cholesterol acyltransferase (LCAT). As part of the SPAP complex, activates spermatozoa motility. This is Apolipoprotein A-I (APOA1) from Cebus imitator (Panamanian white-faced capuchin).